A 237-amino-acid polypeptide reads, in one-letter code: MNIKDIGVIIAKKPLKENTFIITVFTKNHGLYSGVVKEFSKKSKFIYQEGNIIDFLWQARLHEHIGMAKCELIKSYTGYFITNKAKLYAFNSVISLIKELFHEREEHSKFFSFLINYLDNLSKNFCFRDYINFELALLAETGYKLDLTKCGVSHVTTDLIYVSPKSARALSYEVGKPYKDKLLMLPRFLLSDNSEITLEEKRQALALTNYFFNRYLFHNNRQVEARQTFIEYTLNNF.

This sequence belongs to the RecO family.

In terms of biological role, involved in DNA repair and RecF pathway recombination. This chain is DNA repair protein RecO, found in Rickettsia conorii (strain ATCC VR-613 / Malish 7).